Consider the following 610-residue polypeptide: NTPase KAP family P-loop domain-containing protein 1 (610 aa).

Residues 1-414 (MQQEAAQRES…NTVPITVRLL (414 aa)) enclose the KAP NTPase domain. Helical transmembrane passes span 22 to 42 (AVSG…QPII), 118 to 138 (VCLG…LLYL), and 157 to 177 (VFGG…VYSV). The disordered stretch occupies residues 540–587 (ALKPPSPPKSPTRDTPHAAHRANSASRAPPSGRASGQAGEGHHTGDLA). The segment covering 560–575 (RANSASRAPPSGRASG) has biased composition (low complexity).

It localises to the membrane. The chain is NTPase KAP family P-loop domain-containing protein 1 (NKPD1) from Homo sapiens (Human).